A 189-amino-acid polypeptide reads, in one-letter code: Protein GrpE (189 aa).

The span at 1-14 shows a compositional bias: basic and acidic residues; the sequence is MTEKNEEVVEDKNI. Positions 1–38 are disordered; sequence MTEKNEEVVEDKNISDQTDENLTEEIESEADDLQVEPD. Residues 17–35 are compositionally biased toward acidic residues; it reads QTDENLTEEIESEADDLQV.

Belongs to the GrpE family. In terms of assembly, homodimer.

The protein localises to the cytoplasm. In terms of biological role, participates actively in the response to hyperosmotic and heat shock by preventing the aggregation of stress-denatured proteins, in association with DnaK and GrpE. It is the nucleotide exchange factor for DnaK and may function as a thermosensor. Unfolded proteins bind initially to DnaJ; upon interaction with the DnaJ-bound protein, DnaK hydrolyzes its bound ATP, resulting in the formation of a stable complex. GrpE releases ADP from DnaK; ATP binding to DnaK triggers the release of the substrate protein, thus completing the reaction cycle. Several rounds of ATP-dependent interactions between DnaJ, DnaK and GrpE are required for fully efficient folding. In Leuconostoc mesenteroides subsp. mesenteroides (strain ATCC 8293 / DSM 20343 / BCRC 11652 / CCM 1803 / JCM 6124 / NCDO 523 / NBRC 100496 / NCIMB 8023 / NCTC 12954 / NRRL B-1118 / 37Y), this protein is Protein GrpE.